Reading from the N-terminus, the 556-residue chain is Membrane protein insertase YidC (556 aa).

The next 5 membrane-spanning stretches (helical) occupy residues 6–26 (IVLY…WQID), 332–352 (LDLT…FSLM), 358–378 (VVGN…LAFY), 428–448 (LGGC…YWVL), and 501–521 (VMMF…SGLV).

Belongs to the OXA1/ALB3/YidC family. Type 1 subfamily. Interacts with the Sec translocase complex via SecD. Specifically interacts with transmembrane segments of nascent integral membrane proteins during membrane integration.

It is found in the cell inner membrane. In terms of biological role, required for the insertion and/or proper folding and/or complex formation of integral membrane proteins into the membrane. Involved in integration of membrane proteins that insert both dependently and independently of the Sec translocase complex, as well as at least some lipoproteins. Aids folding of multispanning membrane proteins. The protein is Membrane protein insertase YidC of Legionella pneumophila (strain Lens).